A 904-amino-acid chain; its full sequence is Dynamin-like protein C (904 aa).

Positions isoleucine 44 to leucine 102 form a coiled coil. The tract at residues histidine 53–serine 93 is disordered. Residues arginine 67–aspartate 90 are compositionally biased toward basic and acidic residues. The region spanning serine 119–proline 441 is the Dynamin-type G domain. The interval glycine 129–serine 136 is G1 motif. Residue glycine 129–serine 136 coordinates GTP. A G2 motif region spans residues glycine 155 to arginine 157. The segment at serine 169–lysine 227 is disordered. Residues serine 183–serine 213 show a composition bias toward low complexity. Positions aspartate 278–glycine 281 are G3 motif. Residues aspartate 278–phenylalanine 282 and threonine 343–aspartate 346 contribute to the GTP site. Positions threonine 343–aspartate 346 are G4 motif. A G5 motif region spans residues leucine 378 to lysine 381. A coiled-coil region spans residues glutamate 781–phenylalanine 811. 2 disordered regions span residues serine 821–serine 840 and asparagine 853–asparagine 904. Residues asparagine 853 to serine 876 show a composition bias toward polar residues. Low complexity predominate over residues asparagine 877 to glutamine 891.

The protein belongs to the TRAFAC class dynamin-like GTPase superfamily. Dynamin/Fzo/YdjA family.

The protein localises to the cytoplasm. The catalysed reaction is GTP + H2O = GDP + phosphate + H(+). Involved in cytokinesis. May hydrolyze GTP. In Dictyostelium discoideum (Social amoeba), this protein is Dynamin-like protein C (dlpC).